We begin with the raw amino-acid sequence, 341 residues long: Antihemorrhagic factor BJ46a (341 aa).

Residues 1–19 (MNSLVALVLLGQIIGSTLS) form the signal peptide. 2 Cystatin fetuin-A-type domains span residues 22–130 (VRGD…AKCH) and 141–254 (RNCP…SDCV). Residues 23–25 (RGD) carry the Cell attachment site motif. 6 disulfides stabilise this stretch: C28-C332, C85-C96, C110-C129, C143-C146, C205-C217, and C230-C253. A glycan (N-linked (GlcNAc...) asparagine) is linked at N95. N-linked (GlcNAc...) asparagine glycosylation is present at N204. N-linked (GlcNAc...) asparagine glycosylation is found at N282 and N293.

Homodimer. As to expression, expressed by the liver.

It localises to the secreted. In terms of biological role, potent inhibitor of hemorrhagic activity but also proteolytic activities of atrolysin C and jararhagin. Inhibition occurs by formation of a non-covalent complex between BJ46a and the proteinases at their metalloproteinase domains. The protein is Antihemorrhagic factor BJ46a of Bothrops jararaca (Jararaca).